The chain runs to 100 residues: Small ribosomal subunit protein uS14 (100 aa).

Cys63, Cys66, Cys79, and Cys82 together coordinate Zn(2+).

The protein belongs to the universal ribosomal protein uS14 family. As to quaternary structure, part of the 30S ribosomal subunit. Contacts proteins S3 and S10. Requires Zn(2+) as cofactor.

In terms of biological role, binds 16S rRNA, required for the assembly of 30S particles and may also be responsible for determining the conformation of the 16S rRNA at the A site. This is Small ribosomal subunit protein uS14 (rpsN) from Legionella pneumophila (strain Paris).